Here is a 621-residue protein sequence, read N- to C-terminus: GPI-anchor transamidase component GPAA1 (621 aa).

Over 2–19 the chain is Cytoplasmic; it reads GLLSDPVRRRALARLVLR. Residues 20-41 traverse the membrane as a helical segment; that stretch reads LNAPLCVLSYVAGIAWFLALVF. Residues 42-370 lie on the Lumenal side of the membrane; the sequence is PPLTQRTYMS…LLPGLSRFVS (329 aa). Tyr49 and Ser51 together coordinate a 2-acyl-6-[6-phosphoethanolamine-alpha-D-mannosyl-(1-&gt;2)-6-phosphoethanolamine-alpha-D-mannosyl-(1-&gt;6)-2-phosphoethanolamine-alpha-D-mannosyl-(1-&gt;4)-alpha-D-glucosaminyl]-1-(1-radyl,2-acyl-sn-glycero-3-phospho)-1D-myo-inositol. Residue Asn203 is glycosylated (N-linked (GlcNAc...) asparagine). A disulfide bridge links Cys259 with Cys266. 3 residues coordinate a 2-acyl-6-[6-phosphoethanolamine-alpha-D-mannosyl-(1-&gt;2)-6-phosphoethanolamine-alpha-D-mannosyl-(1-&gt;6)-2-phosphoethanolamine-alpha-D-mannosyl-(1-&gt;4)-alpha-D-glucosaminyl]-1-(1-radyl,2-acyl-sn-glycero-3-phospho)-1D-myo-inositol: His354, Gln355, and Ser356. A Mg(2+)-binding site is contributed by Gln355. A helical membrane pass occupies residues 371-393; sequence IGLYMPAVGFLLLVLGLKALELW. At 394–425 the chain is on the cytoplasmic side; sequence MQLHEAGMGLEEPGGAPGPSVPLPPSQGVGLA. Residues 426 to 450 form a helical membrane-spanning segment; that stretch reads SLVAPLLISQAMGLALYVLPVLGQH. Over 451–462 the chain is Lumenal; it reads VATQHFPVAEAE. Residues 463–483 traverse the membrane as a helical segment; that stretch reads AVVLTLLAIYAAGLALPHNTH. Residues 484–495 are Cytoplasmic-facing; that stretch reads RVVSTQAPDRGW. A run of 2 helical transmembrane segments spans residues 496–519 and 520–536; these read MALK…TNFS and LGFL…ALAK. The Cytoplasmic segment spans residues 537-540; it reads PHGP. A helical transmembrane segment spans residues 541–563; the sequence is RTLYAALLVLTSPAATLLGSLFL. The Lumenal portion of the chain corresponds to 564-597; it reads WRELQEAPLSLAEGWQLFLAALAQGVLEHHTYGA. A helical membrane pass occupies residues 598–619; sequence LLFPLLSLGLYPCWLLFWNVLF. The Cytoplasmic portion of the chain corresponds to 620-621; sequence WK.

In terms of assembly, heteropentamer. Part of the GPI-anchor transamidase complex, consisting of PIGK, PIGT, PIGS, PIGU and GAA1. Interacts with PIGK. In terms of tissue distribution, ubiquitously expressed in fetal and adult tissues. Expressed at higher levels in fetal tissues than adult tissues.

It is found in the endoplasmic reticulum membrane. The protein operates within glycolipid biosynthesis; glycosylphosphatidylinositol-anchor biosynthesis. Its function is as follows. Component of the glycosylphosphatidylinositol-anchor (GPI-anchor) transamidase (GPI-T) complex that catalyzes the formation of the linkage between a proprotein and a GPI-anchor and participates in GPI anchored protein biosynthesis. Binds GPI-anchor. This chain is GPI-anchor transamidase component GPAA1, found in Homo sapiens (Human).